The primary structure comprises 361 residues: P2Y purinoceptor 4 (361 aa).

Topologically, residues 1 to 30 (MTSADSLLFTSLGPSPSSGDGDCKFNEEFK) are extracellular. The chain crosses the membrane as a helical span at residues 31–58 (FILLPLSYAVVFVLGLALNAPTLWLFLF). The Cytoplasmic segment spans residues 59–68 (RLRPWDATAT). The chain crosses the membrane as a helical span at residues 69 to 91 (YMFHLALSDTLYVLSLPTLVYYY). At 92–108 (AARNHWPFGTGFCKFVR) the chain is on the extracellular side. Cys-104 and Cys-181 are disulfide-bonded. A helical transmembrane segment spans residues 109-127 (FLFYWNLYCSVLFLTCISV). The Cytoplasmic portion of the chain corresponds to 128–149 (HRYMGICHPLRAIRWGRPRFAG). The chain crosses the membrane as a helical span at residues 150 to 170 (LLCLGVWLVVAGCLVPNLFFV). The Extracellular segment spans residues 171–192 (TTNANGTTILCHDTTLPEEFDH). Asn-175 carries an N-linked (GlcNAc...) asparagine glycan. Residues 193–218 (YVYFSSTIMVLLFGFPFLITLVCYGL) form a helical membrane-spanning segment. The Cytoplasmic segment spans residues 219–242 (MARRLYRPLPGAGQSSSRLRSLRT). The chain crosses the membrane as a helical span at residues 243–265 (IAVVLTVFAVCFVPFHITRTIYY). The Extracellular portion of the chain corresponds to 266 to 283 (LARLLNAECRVLNIVNVV). The chain crosses the membrane as a helical span at residues 284 to 305 (YKVTRPLASANSCLDPVLYLFT). Over 306 to 361 (GDKYRNQLQQLCRGSTPKRRTTASSLALVTLHEESISRWADIHQDSIFPAYEGDRL) the chain is Cytoplasmic.

Belongs to the G-protein coupled receptor 1 family. Phosphorylation of Ser-329 and Ser-330 is a key step in agonist-dependent desensitization and loss of surface P2RY4. This phosphorylation does not involve PKC, nor other calcium-activated kinases. As to expression, expressed in the liver, intestine, stomach, bladder and lung.

The protein localises to the cell membrane. Functionally, receptor for ATP and UTP coupled to G-proteins that activate a phosphatidylinositol-calcium second messenger system. This chain is P2Y purinoceptor 4 (P2ry4), found in Mus musculus (Mouse).